The following is a 176-amino-acid chain: TDYLVSKWKIWYKSLDVNHDGIISIENVEESRNKFTDLHKLVGDKSTGVKVDMQKWWDTYIFLTPGAEISETQFVENLGNSFKKDKAFLATMTACFNMIFDVIDTDKDRSIDLNEFIYAFAAFGHENESVVRTAFALLKPDDDNTVPLRTVVDAWISFVTCEDASKTDVIKSAFES.

Thr1 carries the N-acetylthreonine modification. EF-hand domains are found at residues 3–38, 55–90, 91–126, and 127–160; these read YLVSKWKIWYKSLDVNHDGIISIENVEESRNKFTDL, KWWDTYIFLTPGAEISETQFVENLGNSFKKDKAFLA, TMTACFNMIFDVIDTDKDRSIDLNEFIYAFAAFGHE, and NESVVRTAFALLKPDDDNTVPLRTVVDAWISFVT. Ca(2+) is bound by residues Asp16, Asn18, Asp20, and Asn27. Ca(2+) is bound by residues Asp104, Asp106, Asp108, Ser110, and Glu115.

In terms of biological role, like parvalbumins, SCPs seem to be more abundant in fast contracting muscles, but no functional relationship can be established from this distribution. The polypeptide is Sarcoplasmic calcium-binding protein (Mizuhopecten yessoensis (Japanese scallop)).